We begin with the raw amino-acid sequence, 1009 residues long: DENN domain-containing protein 1A (1009 aa).

A uDENN domain is found at 13-145; that stretch reads FEVYVEVAYP…HKLPIPDPGV (133 aa). Positions 162 to 298 constitute a cDENN domain; the sequence is ELPSIPENRN…VISSLKNRLK (137 aa). Residues 300-378 enclose the dDENN domain; it reads VSTTTGDGVA…DGRLDLLNSG (79 aa). Residues 381 to 385 carry the FXDXF motif motif; the sequence is FSDVF. A disordered region spans residues 453–564; the sequence is DIAENGCAPT…TGPVPAPPDR (112 aa). S473 carries the post-translational modification Phosphoserine. Basic and acidic residues predominate over residues 477 to 489; sequence EAKDPKLREDRRP. The span at 500–509 shows a compositional bias: basic residues; the sequence is PRPHVVKRPK. Phosphothreonine is present on T519. S520, S523, S536, S538, and S546 each carry phosphoserine. Residues 569–578 carry the Clathrin box motif; sequence DLLEDVFSNL. Phosphoserine is present on S592. A disordered region spans residues 648–714; the sequence is IPSKPPAASP…RKTPELGIVP (67 aa). S749 is modified (phosphoserine). Disordered stretches follow at residues 796–831 and 928–1009; these read STLPSRPATPNVATPFTPQFSFPPAGTPTPFPQPPL and RSSA…ETFE. 2 stretches are compositionally biased toward pro residues: residues 820 to 831 and 945 to 957; these read AGTPTPFPQPPL and GDPPLLPPRPPQG. The span at 972–983 shows a compositional bias: basic and acidic residues; the sequence is DPFEDLLQKTKQ. Over residues 986-997 the composition is skewed to low complexity; it reads SPSPALAPAPDS. The segment covering 999 to 1009 has biased composition (basic and acidic residues); it reads EQLRKQWETFE.

In terms of assembly, interacts with RAB35. Interacts with clathrin and with the adapter protein complex 2, AP-2. Interacts with ITSN1 and SH3GL2. Interacts (when phosphorylated) with YWHAE. Post-translationally, phosphorylated on serine and/or threonine in an Akt-dependent manner. Phosphorylation probably regulates the guanine nucleotide exchange factor (GEF) activity, possibly by disrupting an intramolecular interaction between the DENN domain and the C-terminus of the protein, thereby relieving the autoinhibition.

It is found in the cytoplasmic vesicle. Its subcellular location is the clathrin-coated vesicle membrane. The protein resides in the presynaptic cell membrane. With respect to regulation, the guanine nucleotide exchange factor (GEF) activity is autoinhibited. Autoinhibition may be the result of intramolecular interaction between the DENN domain and the C-terminus, which is disrupted upon phosphorylation. Activation is regulated by Akt activation. In terms of biological role, guanine nucleotide exchange factor (GEF) regulating clathrin-mediated endocytosis through RAB35 activation. Promotes the exchange of GDP to GTP, converting inactive GDP-bound RAB35 into its active GTP-bound form. Regulates clathrin-mediated endocytosis of synaptic vesicles and mediates exit from early endosomes. Binds phosphatidylinositol-phosphates (PtdInsPs), with some preference for PtdIns(3)P. The protein is DENN domain-containing protein 1A of Homo sapiens (Human).